A 173-amino-acid chain; its full sequence is NAD(P)H-quinone oxidoreductase subunit J (173 aa).

It belongs to the complex I 30 kDa subunit family. NDH-1 can be composed of about 15 different subunits; different subcomplexes with different compositions have been identified which probably have different functions.

Its subcellular location is the cellular thylakoid membrane. It carries out the reaction a plastoquinone + NADH + (n+1) H(+)(in) = a plastoquinol + NAD(+) + n H(+)(out). The enzyme catalyses a plastoquinone + NADPH + (n+1) H(+)(in) = a plastoquinol + NADP(+) + n H(+)(out). Functionally, NDH-1 shuttles electrons from an unknown electron donor, via FMN and iron-sulfur (Fe-S) centers, to quinones in the respiratory and/or the photosynthetic chain. The immediate electron acceptor for the enzyme in this species is believed to be plastoquinone. Couples the redox reaction to proton translocation, and thus conserves the redox energy in a proton gradient. Cyanobacterial NDH-1 also plays a role in inorganic carbon-concentration. This Prochlorococcus marinus (strain NATL2A) protein is NAD(P)H-quinone oxidoreductase subunit J.